Reading from the N-terminus, the 467-residue chain is ATP-dependent protease ATPase subunit HslU (467 aa).

Residues I20, 62–67, D280, E345, and R417 each bind ATP; that span reads GVGKTE.

Belongs to the ClpX chaperone family. HslU subfamily. In terms of assembly, a double ring-shaped homohexamer of HslV is capped on each side by a ring-shaped HslU homohexamer. The assembly of the HslU/HslV complex is dependent on binding of ATP.

The protein localises to the cytoplasm. Its function is as follows. ATPase subunit of a proteasome-like degradation complex; this subunit has chaperone activity. The binding of ATP and its subsequent hydrolysis by HslU are essential for unfolding of protein substrates subsequently hydrolyzed by HslV. HslU recognizes the N-terminal part of its protein substrates and unfolds these before they are guided to HslV for hydrolysis. In Ligilactobacillus salivarius (strain UCC118) (Lactobacillus salivarius), this protein is ATP-dependent protease ATPase subunit HslU.